Reading from the N-terminus, the 148-residue chain is Large ribosomal subunit protein uL22c (148 aa).

Belongs to the universal ribosomal protein uL22 family. In terms of assembly, part of the 50S ribosomal subunit.

The protein resides in the plastid. The protein localises to the chloroplast. This protein binds specifically to 23S rRNA. In terms of biological role, the globular domain of the protein is located near the polypeptide exit tunnel on the outside of the subunit, while an extended beta-hairpin is found that lines the wall of the exit tunnel in the center of the 70S ribosome. This is Large ribosomal subunit protein uL22c (rpl22) from Triticum aestivum (Wheat).